The chain runs to 143 residues: Large ribosomal subunit protein uL15 (143 aa).

Residues 1–56 form a disordered region; the sequence is MELNSIKPAEGSKHAKRRVGRGIGSGLGKTAGRGHKGQKSRSGGYHKVGFEGGQMP. Over residues 21–31 the composition is skewed to gly residues; sequence RGIGSGLGKTA.

The protein belongs to the universal ribosomal protein uL15 family. Part of the 50S ribosomal subunit.

Functionally, binds to the 23S rRNA. The polypeptide is Large ribosomal subunit protein uL15 (Delftia acidovorans (strain DSM 14801 / SPH-1)).